We begin with the raw amino-acid sequence, 437 residues long: GTPase Der (437 aa).

2 EngA-type G domains span residues 3–168 (PLIA…PETE) and 178–353 (IQLA…QNRS). GTP is bound by residues 9-16 (GRPNVGKS), 56-60 (DTGGY), 120-123 (NKVE), 184-191 (GRPNVGKS), 231-235 (DTAGL), and 296-299 (NKWD). The KH-like domain maps to 354–437 (RKISTSVLNK…VPISMRFMQK (84 aa)).

This sequence belongs to the TRAFAC class TrmE-Era-EngA-EngB-Septin-like GTPase superfamily. EngA (Der) GTPase family. In terms of assembly, associates with the 50S ribosomal subunit.

In terms of biological role, GTPase that plays an essential role in the late steps of ribosome biogenesis. The sequence is that of GTPase Der from Pelodictyon phaeoclathratiforme (strain DSM 5477 / BU-1).